A 510-amino-acid chain; its full sequence is ATP synthase subunit alpha (510 aa).

169 to 176 (GDRQTGKT) contributes to the ATP binding site.

It belongs to the ATPase alpha/beta chains family. In terms of assembly, F-type ATPases have 2 components, CF(1) - the catalytic core - and CF(0) - the membrane proton channel. CF(1) has five subunits: alpha(3), beta(3), gamma(1), delta(1), epsilon(1). CF(0) has three main subunits: a(1), b(2) and c(9-12). The alpha and beta chains form an alternating ring which encloses part of the gamma chain. CF(1) is attached to CF(0) by a central stalk formed by the gamma and epsilon chains, while a peripheral stalk is formed by the delta and b chains.

It localises to the cell inner membrane. The enzyme catalyses ATP + H2O + 4 H(+)(in) = ADP + phosphate + 5 H(+)(out). Its function is as follows. Produces ATP from ADP in the presence of a proton gradient across the membrane. The alpha chain is a regulatory subunit. The sequence is that of ATP synthase subunit alpha from Methylobacterium radiotolerans (strain ATCC 27329 / DSM 1819 / JCM 2831 / NBRC 15690 / NCIMB 10815 / 0-1).